The sequence spans 205 residues: MTSAVGNTGMAAPQRVAALNRPNMVSVGTIVFLSQELMFFAGLFAMYFVSRANGLANGSWAEQTDYLNVPYALAITVILVSSSVTCQFGVFAAERGDVYGLRKWFLITIILGSIFVIGQAYEYFTLVGHGLSIQSSVYGSAFYITTGFHAAHVIAGVIAFVVVLMRIQKAKFTPAQATAAMVVSYYWHFVDVVWIGLFITIYFIQ.

A run of 5 helical transmembrane segments spans residues 29 to 49 (TIVF…MYFV), 73 to 93 (LAIT…VFAA), 104 to 124 (WFLI…YEYF), 144 to 164 (ITTG…VVVL), and 184 to 204 (SYYW…IYFI).

It belongs to the cytochrome c oxidase subunit 3 family. In terms of assembly, associates with subunits I, II and IV to form cytochrome c oxidase.

The protein resides in the cell membrane. The enzyme catalyses 4 Fe(II)-[cytochrome c] + O2 + 8 H(+)(in) = 4 Fe(III)-[cytochrome c] + 2 H2O + 4 H(+)(out). The polypeptide is Cytochrome c oxidase subunit 3 (ctaE) (Corynebacterium efficiens (strain DSM 44549 / YS-314 / AJ 12310 / JCM 11189 / NBRC 100395)).